A 278-amino-acid chain; its full sequence is Casein kinase II subunit beta (278 aa).

Disordered regions lie at residues 1 to 22 (MSQE…DSGA) and 78 to 111 (DEEE…RNKS). An N-acetylserine modification is found at Ser2. The residue at position 2 (Ser2) is a Phosphoserine. The segment covering 78–94 (DEEEDEDDVVEEDEVDQ) has biased composition (acidic residues).

It belongs to the casein kinase 2 subunit beta family. As to quaternary structure, tetramer composed of an alpha subunit, an alpha' subunit, one beta subunit and one beta' subunit. Interacts with FACT subunits POB3 and SPT16. interacts with YTA7. Phosphorylated by alpha subunit.

Regulatory subunit of casein kinase II/CK2. As part of the kinase complex regulates the basal catalytic activity of the alpha subunit a constitutively active serine/threonine-protein kinase that phosphorylates a large number of substrates containing acidic residues C-terminal to the phosphorylated serine or threonine. This is Casein kinase II subunit beta (CKB1) from Saccharomyces cerevisiae (strain ATCC 204508 / S288c) (Baker's yeast).